A 194-amino-acid chain; its full sequence is Adenylate kinase (194 aa).

Position 11–16 (11–16 (GSGKGT)) interacts with ATP. Residues 31 to 60 (STGELLRAEIKAQTELGQAAAGYINEGHLV) are NMP. Residues T32, R37, 58 to 60 (HLV), 86 to 89 (GFPR), and Q93 contribute to the AMP site. Residues 127-137 (NRGKVSGRSDD) are LID. An ATP-binding site is contributed by R128. The AMP site is built by R134 and R145. G173 provides a ligand contact to ATP.

Belongs to the adenylate kinase family. In terms of assembly, monomer.

The protein resides in the cytoplasm. It catalyses the reaction AMP + ATP = 2 ADP. The protein operates within purine metabolism; AMP biosynthesis via salvage pathway; AMP from ADP: step 1/1. Its function is as follows. Catalyzes the reversible transfer of the terminal phosphate group between ATP and AMP. Plays an important role in cellular energy homeostasis and in adenine nucleotide metabolism. The chain is Adenylate kinase from Porphyromonas gingivalis (strain ATCC BAA-308 / W83).